The chain runs to 367 residues: Glutamate 5-kinase (367 aa).

Lys-10 serves as a coordination point for ATP. Residues Ser-50, Asp-137, and Asn-149 each coordinate substrate. Residues 169–170 (TD) and 211–217 (TGGMSTK) each bind ATP. The PUA domain occupies 275–353 (AGEITVDDGA…QQIAEILGYE (79 aa)).

Belongs to the glutamate 5-kinase family.

It localises to the cytoplasm. It catalyses the reaction L-glutamate + ATP = L-glutamyl 5-phosphate + ADP. It participates in amino-acid biosynthesis; L-proline biosynthesis; L-glutamate 5-semialdehyde from L-glutamate: step 1/2. In terms of biological role, catalyzes the transfer of a phosphate group to glutamate to form L-glutamate 5-phosphate. In Pectobacterium carotovorum subsp. carotovorum (strain PC1), this protein is Glutamate 5-kinase.